The primary structure comprises 629 residues: tRNA uridine 5-carboxymethylaminomethyl modification enzyme MnmG (629 aa).

Residues 13–18, V125, and S180 contribute to the FAD site; that span reads GGGHAG. 273–287 contributes to the NAD(+) binding site; sequence GPRYCPSIEDKVMRF. Residue Q370 coordinates FAD.

It belongs to the MnmG family. Homodimer. Heterotetramer of two MnmE and two MnmG subunits. FAD is required as a cofactor.

Its subcellular location is the cytoplasm. NAD-binding protein involved in the addition of a carboxymethylaminomethyl (cmnm) group at the wobble position (U34) of certain tRNAs, forming tRNA-cmnm(5)s(2)U34. The sequence is that of tRNA uridine 5-carboxymethylaminomethyl modification enzyme MnmG from Escherichia coli O157:H7.